A 337-amino-acid polypeptide reads, in one-letter code: D-alanine--D-alanine ligase (337 aa).

The region spanning 126–326 is the ATP-grasp domain; that stretch reads KQIWISNGLS…YADLVLWLLS (201 aa). An ATP-binding site is contributed by 152-207; it reads VKHLGLPLIVKPAHEGSSLGLTKVKSVEELPAAYQLAAGLDKKVIAETCIVGDELT. Mg(2+)-binding residues include Asp279, Glu293, and Asn295.

The protein belongs to the D-alanine--D-alanine ligase family. The cofactor is Mg(2+). Mn(2+) serves as cofactor.

The protein resides in the cytoplasm. The catalysed reaction is 2 D-alanine + ATP = D-alanyl-D-alanine + ADP + phosphate + H(+). It participates in cell wall biogenesis; peptidoglycan biosynthesis. Functionally, cell wall formation. In Polynucleobacter asymbioticus (strain DSM 18221 / CIP 109841 / QLW-P1DMWA-1) (Polynucleobacter necessarius subsp. asymbioticus), this protein is D-alanine--D-alanine ligase.